The sequence spans 286 residues: UDP-3-O-acyl-N-acetylglucosamine deacetylase (286 aa).

Residues H81, H240, and D244 each contribute to the Zn(2+) site. Catalysis depends on H266, which acts as the Proton donor.

It belongs to the LpxC family. Requires Zn(2+) as cofactor.

The catalysed reaction is a UDP-3-O-[(3R)-3-hydroxyacyl]-N-acetyl-alpha-D-glucosamine + H2O = a UDP-3-O-[(3R)-3-hydroxyacyl]-alpha-D-glucosamine + acetate. It functions in the pathway glycolipid biosynthesis; lipid IV(A) biosynthesis; lipid IV(A) from (3R)-3-hydroxytetradecanoyl-[acyl-carrier-protein] and UDP-N-acetyl-alpha-D-glucosamine: step 2/6. Functionally, catalyzes the hydrolysis of UDP-3-O-myristoyl-N-acetylglucosamine to form UDP-3-O-myristoylglucosamine and acetate, the committed step in lipid A biosynthesis. This Francisella tularensis subsp. tularensis (strain FSC 198) protein is UDP-3-O-acyl-N-acetylglucosamine deacetylase.